Consider the following 251-residue polypeptide: Ubiquinone/menaquinone biosynthesis C-methyltransferase UbiE (251 aa).

S-adenosyl-L-methionine contacts are provided by residues threonine 74, aspartate 95, 123-124, and serine 140; that span reads NA.

The protein belongs to the class I-like SAM-binding methyltransferase superfamily. MenG/UbiE family.

It catalyses the reaction a 2-demethylmenaquinol + S-adenosyl-L-methionine = a menaquinol + S-adenosyl-L-homocysteine + H(+). The catalysed reaction is a 2-methoxy-6-(all-trans-polyprenyl)benzene-1,4-diol + S-adenosyl-L-methionine = a 5-methoxy-2-methyl-3-(all-trans-polyprenyl)benzene-1,4-diol + S-adenosyl-L-homocysteine + H(+). Its pathway is quinol/quinone metabolism; menaquinone biosynthesis; menaquinol from 1,4-dihydroxy-2-naphthoate: step 2/2. It participates in cofactor biosynthesis; ubiquinone biosynthesis. Functionally, methyltransferase required for the conversion of demethylmenaquinol (DMKH2) to menaquinol (MKH2) and the conversion of 2-polyprenyl-6-methoxy-1,4-benzoquinol (DDMQH2) to 2-polyprenyl-3-methyl-6-methoxy-1,4-benzoquinol (DMQH2). The sequence is that of Ubiquinone/menaquinone biosynthesis C-methyltransferase UbiE from Yersinia enterocolitica serotype O:8 / biotype 1B (strain NCTC 13174 / 8081).